The primary structure comprises 335 residues: Nonaprenyl diphosphate synthase (335 aa).

Residues lysine 57, arginine 60, and histidine 90 each contribute to the isopentenyl diphosphate site. Residues aspartate 97 and aspartate 101 each coordinate Mg(2+). The DDXXD motif motif lies at 97–101 (DDVMD). Isopentenyl diphosphate is bound at residue arginine 107. The DDXXD motif signature appears at 223–227 (DDIID).

This sequence belongs to the FPP/GGPP synthase family. Mg(2+) serves as cofactor.

It carries out the reaction isopentenyl diphosphate + (2E)-geranyl diphosphate = (2E,6E)-farnesyl diphosphate + diphosphate. The enzyme catalyses isopentenyl diphosphate + (2E,6E)-farnesyl diphosphate = (2E,6E,10E)-geranylgeranyl diphosphate + diphosphate. The catalysed reaction is 5 isopentenyl diphosphate + (2E,6E,10E)-geranylgeranyl diphosphate = all-trans-nonaprenyl diphosphate + 5 diphosphate. It participates in isoprenoid biosynthesis; farnesyl diphosphate biosynthesis; farnesyl diphosphate from geranyl diphosphate and isopentenyl diphosphate. It functions in the pathway isoprenoid biosynthesis; geranylgeranyl diphosphate biosynthesis; geranylgeranyl diphosphate from farnesyl diphosphate and isopentenyl diphosphate: step 1/1. In terms of biological role, catalyzes the sequential condensations of isopentenyl pyrophosphate (IPP) with geranyl diphosphate (GPP) to yield (2E,6E)-farnesyl diphosphate (E,E-FPP), with E,E-FPP to yield geranylgeranyl diphosphate (GGPP) and with GGPP to yield nonaprenyl diphosphate. May also have weak activity with dimethylallyl diphosphate (DMAPP). This is Nonaprenyl diphosphate synthase from Mycobacterium tuberculosis (strain ATCC 25618 / H37Rv).